A 394-amino-acid polypeptide reads, in one-letter code: MVEADRPGKLFIGGLNLETDEKALEAEFGKYGRIVEVLLMKDRETNKSRGFAFVTFESPANAKAAARDMNGKSLDGKAIKVAQATKPAFESSRRGPPPPRSRGRPRFLRGTRGGGGGPRRSPSRGGPDDDGGYAGDFDLRPSRAPMPMKRGPPPPPRRAGPPPKRAAPSGPARSSGGGMRGRALAVRGRDGYSGPPRREPPPPRRDPYLGPRDEGYSSRDGYSSRDYREPRGFAPSPREYTHREYGHSSVRDDCPLRGYGDRDGYGCRDRDYGDHPSRGSYREPFESYGDLRGGAPGRGTPPSYGGGGRYEEYRGCSPDAYSGGRDSYSSSYGRSDRYSRGRDRVGRPDRGLSLSMERGCPPQRDSYSRSGCRVPRGGGRLGGRMERGGGRSRY.

An RRM domain is found at 8–86 (GKLFIGGLNL…KAIKVAQATK (79 aa)). The segment covering 67 to 78 (RDMNGKSLDGKA) has biased composition (basic and acidic residues). Residues 67–394 (RDMNGKSLDG…MERGGGRSRY (328 aa)) form a disordered region. The segment covering 150 to 165 (RGPPPPPRRAGPPPKR) has biased composition (pro residues). Basic and acidic residues-rich tracts occupy residues 196-231 (PRREPPPPRRDPYLGPRDEGYSSRDGYSSRDYREPR) and 239-285 (EYTH…REPF). Residues 321-333 (YSGGRDSYSSSYG) show a composition bias toward low complexity. Composition is skewed to basic and acidic residues over residues 334–350 (RSDRYSRGRDRVGRPDR) and 383–394 (GRMERGGGRSRY).

It localises to the nucleus. In Macaca fascicularis (Crab-eating macaque), this protein is RNA-binding motif protein, X-linked-like-2 (RBMXL2).